A 258-amino-acid polypeptide reads, in one-letter code: Small ribosomal subunit protein uS2 (258 aa).

The disordered stretch occupies residues 226–258; that stretch reads QGVSNEEVAAEQNIDLDEKEKSEETEATEATEE.

It belongs to the universal ribosomal protein uS2 family.

The sequence is that of Small ribosomal subunit protein uS2 from Staphylococcus aureus (strain COL).